A 354-amino-acid chain; its full sequence is Uroporphyrinogen decarboxylase (354 aa).

Substrate-binding positions include 27–31, Asp77, Tyr154, Thr209, and His327; that span reads RQAGR.

Belongs to the uroporphyrinogen decarboxylase family. In terms of assembly, homodimer.

The protein localises to the cytoplasm. The catalysed reaction is uroporphyrinogen III + 4 H(+) = coproporphyrinogen III + 4 CO2. It functions in the pathway porphyrin-containing compound metabolism; protoporphyrin-IX biosynthesis; coproporphyrinogen-III from 5-aminolevulinate: step 4/4. Catalyzes the decarboxylation of four acetate groups of uroporphyrinogen-III to yield coproporphyrinogen-III. The chain is Uroporphyrinogen decarboxylase from Salmonella agona (strain SL483).